Here is a 250-residue protein sequence, read N- to C-terminus: GILT-like protein 1 (250 aa).

An N-terminal signal peptide occupies residues M1 to S21. A glycan (N-linked (GlcNAc...) asparagine) is linked at N157.

The protein belongs to the GILT family. Conjugated to URM1, a ubiquitin-like protein.

It localises to the secreted. In terms of biological role, involved in the immune response to bacterial infection. This chain is GILT-like protein 1, found in Drosophila melanogaster (Fruit fly).